Consider the following 398-residue polypeptide: tRNA-specific 2-thiouridylase MnmA (398 aa).

Residues 18–25 and leucine 44 each bind ATP; that span reads AMSGGVDS. Cysteine 112 functions as the Nucleophile in the catalytic mechanism. A disulfide bond links cysteine 112 and cysteine 213. An ATP-binding site is contributed by glycine 136. An interaction with tRNA region spans residues 163–165; it reads RDQ. Cysteine 213 serves as the catalytic Cysteine persulfide intermediate.

This sequence belongs to the MnmA/TRMU family.

The protein resides in the cytoplasm. The catalysed reaction is S-sulfanyl-L-cysteinyl-[protein] + uridine(34) in tRNA + AH2 + ATP = 2-thiouridine(34) in tRNA + L-cysteinyl-[protein] + A + AMP + diphosphate + H(+). Its function is as follows. Catalyzes the 2-thiolation of uridine at the wobble position (U34) of tRNA, leading to the formation of s(2)U34. In Agrobacterium fabrum (strain C58 / ATCC 33970) (Agrobacterium tumefaciens (strain C58)), this protein is tRNA-specific 2-thiouridylase MnmA.